Consider the following 904-residue polypeptide: HTH-type transcriptional regulator MalT (904 aa).

39 to 46 is a binding site for ATP; it reads CPAGYGKT. One can recognise an HTH luxR-type domain in the interval 832–897; that stretch reads ELIRTSPLTQ…EAVQQAQQLL (66 aa). The segment at residues 856–875 is a DNA-binding region (H-T-H motif); the sequence is NDQIAGELAVAATTIKTHIR.

This sequence belongs to the MalT family. In terms of assembly, monomer in solution. Oligomerizes to an active state in the presence of the positive effectors ATP and maltotriose.

Activated by ATP and maltotriose, which are both required for DNA binding. Its function is as follows. Positively regulates the transcription of the maltose regulon whose gene products are responsible for uptake and catabolism of malto-oligosaccharides. Specifically binds to the promoter region of its target genes, recognizing a short DNA motif called the MalT box. The chain is HTH-type transcriptional regulator MalT from Serratia proteamaculans (strain 568).